We begin with the raw amino-acid sequence, 98 residues long: (4S)-4-hydroxy-5-phosphonooxypentane-2,3-dione isomerase (98 aa).

One can recognise an ABM domain in the interval 2–91; sequence NVTLVEINIK…MSQPRQKRSF (90 aa).

The protein belongs to the LsrG family. In terms of assembly, homodimer.

The protein localises to the cytoplasm. The enzyme catalyses (2S)-2-hydroxy-3,4-dioxopentyl phosphate = 3-hydroxy-2,4-dioxopentyl phosphate. Involved in the degradation of phospho-AI-2, thereby terminating induction of the lsr operon and closing the AI-2 signaling cycle. Catalyzes the conversion of (4S)-4-hydroxy-5-phosphonooxypentane-2,3-dione (P-DPD) to 3-hydroxy-5-phosphonooxypentane-2,4-dione (P-HPD). The protein is (4S)-4-hydroxy-5-phosphonooxypentane-2,3-dione isomerase of Klebsiella pneumoniae subsp. pneumoniae (strain ATCC 700721 / MGH 78578).